The primary structure comprises 240 residues: MSAPLSLFVTGTDTEIGKTFVSAALLHGFARAGLRAAAMKPVAAGAYERDGAWRNEDADQLDAAANVALPAAIRTPFLLKAPAAPHIVAAREGVALDIGTIVDAHRRACEMADVIVVEGVGGVRVPLADTRDTADLAVALGLPVVLVVGVRLGCISHALLTAEAIAARGLPLAGWVANRIDPAMPFADDNIDTLRAWLEREHRAPLLGALAHMSPPSPDAASHALDVNLLLNALRAAAPR.

15-20 contacts ATP; the sequence is EIGKTF. Thr19 lines the Mg(2+) pocket. Residue Lys40 is part of the active site. ATP is bound by residues Asp57, 118–121, and 178–179; these read EGVG and NR. Mg(2+) contacts are provided by Asp57 and Glu118.

This sequence belongs to the dethiobiotin synthetase family. In terms of assembly, homodimer. Requires Mg(2+) as cofactor.

Its subcellular location is the cytoplasm. It carries out the reaction (7R,8S)-7,8-diammoniononanoate + CO2 + ATP = (4R,5S)-dethiobiotin + ADP + phosphate + 3 H(+). It functions in the pathway cofactor biosynthesis; biotin biosynthesis; biotin from 7,8-diaminononanoate: step 1/2. In terms of biological role, catalyzes a mechanistically unusual reaction, the ATP-dependent insertion of CO2 between the N7 and N8 nitrogen atoms of 7,8-diaminopelargonic acid (DAPA, also called 7,8-diammoniononanoate) to form a ureido ring. In Burkholderia mallei (strain NCTC 10247), this protein is ATP-dependent dethiobiotin synthetase BioD.